The chain runs to 171 residues: S-ribosylhomocysteine lyase (171 aa).

Residues histidine 54, histidine 58, and cysteine 128 each coordinate Fe cation.

Belongs to the LuxS family. In terms of assembly, homodimer. Requires Fe cation as cofactor.

The catalysed reaction is S-(5-deoxy-D-ribos-5-yl)-L-homocysteine = (S)-4,5-dihydroxypentane-2,3-dione + L-homocysteine. Functionally, involved in the synthesis of autoinducer 2 (AI-2) which is secreted by bacteria and is used to communicate both the cell density and the metabolic potential of the environment. The regulation of gene expression in response to changes in cell density is called quorum sensing. Catalyzes the transformation of S-ribosylhomocysteine (RHC) to homocysteine (HC) and 4,5-dihydroxy-2,3-pentadione (DPD). In Escherichia coli (strain 55989 / EAEC), this protein is S-ribosylhomocysteine lyase.